A 543-amino-acid polypeptide reads, in one-letter code: Glutamyl-tRNA(Gln) amidotransferase subunit B-1, chloroplastic/mitochondrial (543 aa).

The tract at residues 1 to 47 (MIRAGGPSPSPRGRRAGPIRLPRRAPSSTPTRAKTEEKASADASSRT) is disordered. Basic residues predominate over residues 12 to 23 (RGRRAGPIRLPR).

The protein belongs to the GatB/GatE family. GatB subfamily. Subunit of the heterotrimeric GatCAB amidotransferase (AdT) complex, composed of A, B and C subunits.

The protein resides in the mitochondrion. It localises to the plastid. The protein localises to the chloroplast. It carries out the reaction L-glutamyl-tRNA(Gln) + L-glutamine + ATP + H2O = L-glutaminyl-tRNA(Gln) + L-glutamate + ADP + phosphate + H(+). Allows the formation of correctly charged Gln-tRNA(Gln) through the transamidation of misacylated Glu-tRNA(Gln) in chloroplasts and mitochondria. The reaction takes place in the presence of glutamine and ATP through an activated gamma-phospho-Glu-tRNA(Gln). In Micromonas commoda (strain RCC299 / NOUM17 / CCMP2709) (Picoplanktonic green alga), this protein is Glutamyl-tRNA(Gln) amidotransferase subunit B-1, chloroplastic/mitochondrial.